The chain runs to 68 residues: Antimicrobial peptide VpCT3 (68 aa).

The first 23 residues, 1–23 (MKTQIVILIVAVLVLQLVSQSDA), serve as a signal peptide directing secretion. Residue Leu-36 is modified to Leucine amide. The propeptide occupies 37–68 (GKRGLKNLDQYNDLFDGEISDADIKFLQDLMR).

This sequence belongs to the non-disulfide-bridged peptide (NDBP) superfamily. Short antimicrobial peptide (group 4) family. Expressed by the venom gland.

The protein localises to the secreted. The protein resides in the target cell membrane. In terms of biological role, antimicrobial peptide with weak activity against all bacteria tested (MIC&gt;100 uM) and all yeasts tested (MIC&gt;200 uM). Also provokes weak hemolysis on human erythrocytes (HC(50)=83.7 uM). This is Antimicrobial peptide VpCT3 from Mesomexovis punctatus (Scorpion).